The primary structure comprises 137 residues: Holo-[acyl-carrier-protein] synthase (137 aa).

Mg(2+)-binding residues include Asp8 and Glu58.

Belongs to the P-Pant transferase superfamily. AcpS family. Mg(2+) serves as cofactor.

The protein localises to the cytoplasm. It catalyses the reaction apo-[ACP] + CoA = holo-[ACP] + adenosine 3',5'-bisphosphate + H(+). Transfers the 4'-phosphopantetheine moiety from coenzyme A to a Ser of acyl-carrier-protein. The protein is Holo-[acyl-carrier-protein] synthase of Lactobacillus delbrueckii subsp. bulgaricus (strain ATCC BAA-365 / Lb-18).